We begin with the raw amino-acid sequence, 455 residues long: Histone chaperone RTT106 (455 aa).

Position 2 is an N-acetylserine (Ser2). Residues 2–67 form a dimeric region region; that stretch reads SKLFLDELPE…SSDLLKTDEI (66 aa). PH domains lie at 68 to 200 and 217 to 301; these read SETN…GFKI and INSF…VKRK. The double PH domain stretch occupies residues 68–301; sequence SETNTIFKLE…AKIDDYVKRK (234 aa). Positions 305–314 are enriched in basic and acidic residues; the sequence is DKSMSEELKA. A disordered region spans residues 305 to 455; that stretch reads DKSMSEELKA…DEDGSGVEYD (151 aa). The segment covering 319–339 has biased composition (polar residues); it reads KGQATDGTADQPSILQEATRQ. Acidic residues-rich tracts occupy residues 350–366 and 376–395; these read SDDD…ESDL and DGAE…DEEE. Over residues 402-418 the composition is skewed to polar residues; that stretch reads ALNRDNSFASINGQPEQ. A phosphoserine mark is found at Ser408 and Ser411. Over residues 420 to 429 the composition is skewed to basic and acidic residues; that stretch reads LQYKEFKEPL. The segment covering 430-455 has biased composition (acidic residues); sequence ELEDIPIEIDNDDDEDDEDGSGVEYD. Ser450 carries the phosphoserine modification.

The protein belongs to the RTT106 family. Homodimers (via the N-terminal domain). Interacts with the SWI/SNF complex. Interacts with the RSC complex. Interacts with the HIR complex. Interacts with the CAF-1 complex. Interacts with RLF2. Interacts with SIR4. Interacts with YTA7. Interacts with CAC2. Interacts with HPC2. Interacts with HIR2. Interacts with MSI1. Interacts with HIR1. Interacts with histone H3. Interacts with histone H4.

It is found in the nucleus. Its subcellular location is the chromosome. Histones H3 and H4 chaperone involved in the nucleosome formation and heterochromatin silencing. Required for the deposition of H3K56ac-carrying H3-H4 complex onto newly-replicated DNA. Plays a role in the transcriptional regulation of the cell-cycle dependent histone genes by directly recruiting the SWI/SNF and RSC chromatin remodeling complexes to the histone genes in a cell cycle dependent manner. In cooperation with HIR and ASF1, creates a repressive structure at the core histone gene promoter and contributes to their repression outside of S phase. Involved in regulation of Ty1 transposition. This is Histone chaperone RTT106 from Saccharomyces cerevisiae (strain ATCC 204508 / S288c) (Baker's yeast).